The sequence spans 293 residues: Phosphatidylserine decarboxylase proenzyme (293 aa).

Residues D88, H144, and S247 each act as charge relay system; for autoendoproteolytic cleavage activity in the active site. S247 functions as the Schiff-base intermediate with substrate; via pyruvic acid; for decarboxylase activity in the catalytic mechanism. S247 is subject to Pyruvic acid (Ser); by autocatalysis.

It belongs to the phosphatidylserine decarboxylase family. PSD-B subfamily. Prokaryotic type I sub-subfamily. As to quaternary structure, heterodimer of a large membrane-associated beta subunit and a small pyruvoyl-containing alpha subunit. Pyruvate serves as cofactor. Post-translationally, is synthesized initially as an inactive proenzyme. Formation of the active enzyme involves a self-maturation process in which the active site pyruvoyl group is generated from an internal serine residue via an autocatalytic post-translational modification. Two non-identical subunits are generated from the proenzyme in this reaction, and the pyruvate is formed at the N-terminus of the alpha chain, which is derived from the carboxyl end of the proenzyme. The autoendoproteolytic cleavage occurs by a canonical serine protease mechanism, in which the side chain hydroxyl group of the serine supplies its oxygen atom to form the C-terminus of the beta chain, while the remainder of the serine residue undergoes an oxidative deamination to produce ammonia and the pyruvoyl prosthetic group on the alpha chain. During this reaction, the Ser that is part of the protease active site of the proenzyme becomes the pyruvoyl prosthetic group, which constitutes an essential element of the active site of the mature decarboxylase.

The protein resides in the cell membrane. The catalysed reaction is a 1,2-diacyl-sn-glycero-3-phospho-L-serine + H(+) = a 1,2-diacyl-sn-glycero-3-phosphoethanolamine + CO2. The protein operates within phospholipid metabolism; phosphatidylethanolamine biosynthesis; phosphatidylethanolamine from CDP-diacylglycerol: step 2/2. In terms of biological role, catalyzes the formation of phosphatidylethanolamine (PtdEtn) from phosphatidylserine (PtdSer). In Xylella fastidiosa (strain M23), this protein is Phosphatidylserine decarboxylase proenzyme.